A 417-amino-acid polypeptide reads, in one-letter code: Phosphoribosylamine--glycine ligase (417 aa).

The 200-residue stretch at 108–307 (KRIMDEAGVP…LSTLLFAAAT (200 aa)) folds into the ATP-grasp domain. 134 to 188 (LDEFGAPYVVKADGLAAGKGVIVTEDRAAALAHAARYLTHGSVLVEEFLDGEEVS) lines the ATP pocket. 2 residues coordinate Mg(2+): glutamate 277 and asparagine 279.

The protein belongs to the GARS family. Mg(2+) is required as a cofactor. Mn(2+) serves as cofactor.

The enzyme catalyses 5-phospho-beta-D-ribosylamine + glycine + ATP = N(1)-(5-phospho-beta-D-ribosyl)glycinamide + ADP + phosphate + H(+). Its pathway is purine metabolism; IMP biosynthesis via de novo pathway; N(1)-(5-phospho-D-ribosyl)glycinamide from 5-phospho-alpha-D-ribose 1-diphosphate: step 2/2. The sequence is that of Phosphoribosylamine--glycine ligase from Leifsonia xyli subsp. xyli (strain CTCB07).